The primary structure comprises 122 residues: Large ribosomal subunit protein bL19 (122 aa).

Belongs to the bacterial ribosomal protein bL19 family.

Functionally, this protein is located at the 30S-50S ribosomal subunit interface and may play a role in the structure and function of the aminoacyl-tRNA binding site. This is Large ribosomal subunit protein bL19 from Chlamydia felis (strain Fe/C-56) (Chlamydophila felis).